A 205-amino-acid chain; its full sequence is ITG-like peptide (205 aa).

The signal sequence occupies residues 1-15; sequence MRVYAAITLVLVANT. 2 propeptides span residues 16-188 and 202-205; these read AYIG…TSGE and MPFA.

Expressed throughout the nervous system (at protein level).

The protein localises to the secreted. The polypeptide is ITG-like peptide (Camponotus floridanus (Florida carpenter ant)).